The primary structure comprises 314 residues: Trihelix transcription factor ASR3 (314 aa).

Residues 1–34 are disordered; the sequence is MALEQLGLGVSAVDGGENSSAPSNDGGDDGVKTA. The region spanning 38 to 104 is the Myb-like domain; it reads RWTRQEILVL…QCRKRWSNLA (67 aa). The Nuclear localization signal motif lies at 84–91; it reads CKRHGVNR. The EAR 1 signature appears at 161–165; sequence LSLGL. Thr189 carries the post-translational modification Phosphothreonine; by MAPK4. Residues 207-255 form a disordered region; that stretch reads CVADQGRVKEKQPEAANVEGGSTSQEERKRKRTSFGEKEEEEEEGETKK. The EAR 2 motif lies at 280–284; that stretch reads LNLKL.

As to quaternary structure, homodimer. Interacts directly with MPK4. Phosphorylated on Thr-189 by MPK4 in response to microbe-associated molecular patterns (MAMPs, e.g. flg22, elf18, chitin, and LPS). This phosphorylation enhances DNA-binding and thus negatively regulates immune gene expression.

It is found in the nucleus. Functionally, transcriptional repressor that binds DNA and plays a negative role in regulating microbe-associated molecular patterns-(MAMPs, e.g. flg22, elf18, chitin, and LPS) triggered immunity (PTI) by negatively regulating immune gene expression. This Arabidopsis thaliana (Mouse-ear cress) protein is Trihelix transcription factor ASR3.